The sequence spans 708 residues: Retrotransposon-derived protein PEG10 (708 aa).

Positions 1 to 50 form a coiled coil; that stretch reads MTERRRDELSEEINNLREKVMKQSEENNNLQSQVQKLTEENTTLREQVEP. A disordered region spans residues 21 to 74; the sequence is MKQSEENNNLQSQVQKLTEENTTLREQVEPTPEDEDDDIELRGAAAAAAPPPPI. Residues 26 to 36 show a composition bias toward polar residues; sequence ENNNLQSQVQK. A compositionally biased stretch (basic and acidic residues) spans 37 to 48; that stretch reads LTEENTTLREQV. A necessary for interaction with ACVRL1 region spans residues 76–275; sequence EECPEDLPEK…HQVDPTEPVG (200 aa). The CCHC-type zinc finger occupies 293–310; sequence NLCLYCGTGGHYADNCPA. The disordered stretch occupies residues 310–344; that stretch reads AKASKSSPAGKLPGPAVEGPSATGPEIIRSPQDDA. Glycyl lysine isopeptide (Lys-Gly) (interchain with G-Cter in ubiquitin) cross-links involve residues lysine 311 and lysine 314. Residues serine 316 and leucine 321 each carry the phosphoserine modification. 3 positions are modified to omega-N-methylarginine: arginine 507, arginine 598, and arginine 611. Positions 683–708 are disordered; that stretch reads PVPQYPPPQPPPPPPPPPPPPSYSTL.

As to quaternary structure, homooligomer; homooligomerizes into virion-like capsids. Interacts with ACVRL1. Interacts with SIAH1 and SIAH2. Undergoes proteolytic cleavage. As to expression, expressed in the cytotrophoblast layer but not in the overlying syncytiotrophoblast of the placenta. Expressed in prostate and breast carcinomas but not in normal breast and prostate epithelial cells. Expressed in the Hep-G2 cell line (at protein level). Expressed in brain, liver, spleen, kidney, thymus, lung, ovary, testis, reactive lymph node, skeletal muscle, adipose tissue and placenta. Expressed in pancreatic and hepatocellular carcinomas (HCC).

The protein localises to the extracellular vesicle membrane. The protein resides in the cytoplasm. It localises to the nucleus. Retrotransposon-derived protein that binds its own mRNA and self-assembles into virion-like capsids. Forms virion-like extracellular vesicles that encapsulate their own mRNA and are released from cells, enabling intercellular transfer of PEG10 mRNA. Binds its own mRNA in the 5'-UTR region, in the region near the boundary between the nucleocapsid (NC) and protease (PRO) coding sequences and in the beginning of the 3'-UTR region. Involved in placenta formation: required for trophoblast stem cells differentiation. Involved at the immediate early stage of adipocyte differentiation. Overexpressed in many cancers and enhances tumor progression: promotes cell proliferation by driving cell cycle progression from G0/G1. Enhances cancer progression by inhibiting the TGF-beta signaling, possibly via interaction with the TGF-beta receptor ACVRL1. May bind to the 5'-GCCTGTCTTT-3' DNA sequence of the MB1 domain in the myelin basic protein (MBP) promoter; additional evidences are however required to confirm this result. This is Retrotransposon-derived protein PEG10 from Homo sapiens (Human).